Consider the following 598-residue polypeptide: DNA mismatch repair protein MutL (598 aa).

It belongs to the DNA mismatch repair MutL/HexB family.

In terms of biological role, this protein is involved in the repair of mismatches in DNA. It is required for dam-dependent methyl-directed DNA mismatch repair. May act as a 'molecular matchmaker', a protein that promotes the formation of a stable complex between two or more DNA-binding proteins in an ATP-dependent manner without itself being part of a final effector complex. This Geotalea daltonii (strain DSM 22248 / JCM 15807 / FRC-32) (Geobacter daltonii) protein is DNA mismatch repair protein MutL.